Reading from the N-terminus, the 384-residue chain is S-adenosylmethionine synthase (384 aa).

Residue H15 coordinates ATP. D17 is a Mg(2+) binding site. E43 contributes to the K(+) binding site. E56 and Q99 together coordinate L-methionine. The interval 99-109 (QSPDINQGVDR) is flexible loop. ATP-binding positions include 164–166 (DAK), 230–231 (RF), D239, 245–246 (RK), A262, and K266. D239 contacts L-methionine. K270 lines the L-methionine pocket.

It belongs to the AdoMet synthase family. As to quaternary structure, homotetramer; dimer of dimers. It depends on Mg(2+) as a cofactor. K(+) serves as cofactor.

The protein resides in the cytoplasm. It carries out the reaction L-methionine + ATP + H2O = S-adenosyl-L-methionine + phosphate + diphosphate. It functions in the pathway amino-acid biosynthesis; S-adenosyl-L-methionine biosynthesis; S-adenosyl-L-methionine from L-methionine: step 1/1. Its function is as follows. Catalyzes the formation of S-adenosylmethionine (AdoMet) from methionine and ATP. The overall synthetic reaction is composed of two sequential steps, AdoMet formation and the subsequent tripolyphosphate hydrolysis which occurs prior to release of AdoMet from the enzyme. This chain is S-adenosylmethionine synthase, found in Edwardsiella ictaluri (strain 93-146).